The sequence spans 237 residues: 1-(5-phosphoribosyl)-5-[(5-phosphoribosylamino)methylideneamino] imidazole-4-carboxamide isomerase (237 aa).

The Proton acceptor role is filled by Asp8. Residue Asp128 is the Proton donor of the active site.

Belongs to the HisA/HisF family.

It is found in the cytoplasm. The enzyme catalyses 1-(5-phospho-beta-D-ribosyl)-5-[(5-phospho-beta-D-ribosylamino)methylideneamino]imidazole-4-carboxamide = 5-[(5-phospho-1-deoxy-D-ribulos-1-ylimino)methylamino]-1-(5-phospho-beta-D-ribosyl)imidazole-4-carboxamide. The protein operates within amino-acid biosynthesis; L-histidine biosynthesis; L-histidine from 5-phospho-alpha-D-ribose 1-diphosphate: step 4/9. This is 1-(5-phosphoribosyl)-5-[(5-phosphoribosylamino)methylideneamino] imidazole-4-carboxamide isomerase from Gemmatimonas aurantiaca (strain DSM 14586 / JCM 11422 / NBRC 100505 / T-27).